Reading from the N-terminus, the 199-residue chain is Phosphoserine phosphatase RsbX (199 aa).

Residues 11-198 form the PPM-type phosphatase domain; that stretch reads QTLVYQLNKE…DDLTYILGQL (188 aa).

It carries out the reaction O-phospho-L-serine + H2O = L-serine + phosphate. The catalysed reaction is O-phospho-D-serine + H2O = D-serine + phosphate. Its function is as follows. Negative regulator of sigma-B activity. Dephosphorylates RsbS. Plays a role both in maintaining low sigma-B activity during growth and in reestablishing prestress sigma-B activity after induction. Could have a negative feedback role by indirectly communicating sigma-B protein levels. This chain is Phosphoserine phosphatase RsbX (rsbX), found in Bacillus subtilis (strain 168).